A 1259-amino-acid polypeptide reads, in one-letter code: MSLWKKISLGVLIFILLLLATVGFLVGTTTGLHLVFSAANRWVPGLEIGQVTGGWRDLSLKNIRYDQPGVAVNAGEVHLAVGLECLWKSSLCVNDLSLKDINVVIDSKKMPPGEQVEEEEESGPLNLSTPYPVTLSRVALENINVKIDDTTVSVMDFTSGLNWQEKNLTLKPTALQGLLIALPKVAEVAQEEVVEPKIQNPQPDEKPLGETLQDLFSKPVLPEMTDVHLPLNLNIEEFKGEQLRLTGDTDLTVFSLLLKVSSIDGNMKLDALDIDSSQGAVNATGTAQLANNWPVDITLNSTLNVEPLKGEKIKLKVGGALREQLEVGVNLSGPLDVNLRAQARLAEAGLPLNLEVVSEQISWPFTGDRQFQADNTRLKLTGKMTDYTLSMRTAVKGQDVPPATITLDAKGNEQQINLDKLTVAALEGKTELKALVDWRQAISWRGELTLDGINTAKEVPDWPSKLNGLIKTRGSLYGGSWQMEVPELKLTGNVKQNKVNVNGSLKGNSYMQWTIPGLHLVLGPNSADVKGELGVKDLNLDATIDAPGLDNALPGLGGTAKGLVKVRGTVDAPQLLADITARGLRWQELSIAQVRVDGDIKSTDQIAGKLDVRVERISQPDVNINLVTLHAKGSEKQHELQLRIQGEPVSGQLDLAGSFDREEMRWKGTLSNTRFRTPVGPWSQTRAIALDYRGQEQKISIGPHCWTNPNAELCVPQTIDAGAEGRAVVNLNRFDLAMLKPFMPETTQASGVFSGKADVAWDTTKEGLPQGNVTLSGRSVKVTQTVNDAPLPLAFDTLNVSADLHDNRAELGWQIRLSNNGQLDGQVQVTDPQGRRNLGGNVSIRNLNLAMVNPIFARGEKAAGLLNANLRLGGDVQSPQMFGQLQLNGVDIDGNFMPFDMQPSQLAMNFNGTRSTLTGVVRTQQGEINLSGDADWSQIENWRARIAAKGSRVRITVPPMVRLDVSPDVVFEATPSLFTLDGRVDVPWARIVVHELPESAVGVSSDEVMLNNQLQPEEPQTAAIPINSNLIVHVGNNVRMDAFGLRARLTGDLKVAQDKQGLGLNGQINIPEGRFHAYGQDLLVRKGELLFSGPPDQPILNIEAIRNPEATEDDVIAGVRVTGSADEPKAEIFSDPAMSQQEALSYLLRGQGLDSNQSDSAAMTSMLIGLGVAQSGQVVGKIGETFGVSNLALDTQGVGDSSQVVVSGYVLPGLQVKYGVGIFDSLATLTLRYRLMPKLYLEAVSGVDQALDLLYQFEF.

Residues 1-6 are Cytoplasmic-facing; sequence MSLWKK. The helical; Signal-anchor for type II membrane protein transmembrane segment at 7–27 threads the bilayer; it reads ISLGVLIFILLLLATVGFLVG. The Periplasmic segment spans residues 28–1259; sequence TTTGLHLVFS…ALDLLYQFEF (1232 aa).

It belongs to the TamB family. Interacts with TamA to form the translocation and assembly module (TAM).

It is found in the cell inner membrane. Its function is as follows. Component of the translocation and assembly module (TAM), which facilitates the insertion and assembly of specific beta-barrel proteins into the outer membrane. Promotes the secretion across the outer membrane of autotransporters such as p1121. Functionally, in addition, is involved in outer membrane lipid homeostasis. Likely transports phospholipids between the inner membrane and the outer membrane. The protein is Translocation and assembly module subunit TamB (tamB) of Citrobacter rodentium (strain ICC168) (Citrobacter freundii biotype 4280).